The chain runs to 312 residues: Protoheme IX farnesyltransferase (312 aa).

Helical transmembrane passes span 29–49 (VMSL…GHMN), 50–70 (PVLA…SGAL), 90–110 (IPAG…LSAF), 117–137 (LMVN…YAVI), 150–170 (IVIG…AATG), 177–197 (LVLF…LSLF), 223–243 (ALFY…MGFA), 246–266 (FYGV…WRLW), and 292–312 (IFAV…FGVF).

This sequence belongs to the UbiA prenyltransferase family. Protoheme IX farnesyltransferase subfamily.

It localises to the cell inner membrane. It catalyses the reaction heme b + (2E,6E)-farnesyl diphosphate + H2O = Fe(II)-heme o + diphosphate. It functions in the pathway porphyrin-containing compound metabolism; heme O biosynthesis; heme O from protoheme: step 1/1. Its function is as follows. Converts heme B (protoheme IX) to heme O by substitution of the vinyl group on carbon 2 of heme B porphyrin ring with a hydroxyethyl farnesyl side group. This Brucella melitensis biotype 1 (strain ATCC 23456 / CCUG 17765 / NCTC 10094 / 16M) protein is Protoheme IX farnesyltransferase.